Consider the following 308-residue polypeptide: Methionyl-tRNA formyltransferase (308 aa).

Residue 110–113 (SLLP) participates in (6S)-5,6,7,8-tetrahydrofolate binding.

The protein belongs to the Fmt family.

The enzyme catalyses L-methionyl-tRNA(fMet) + (6R)-10-formyltetrahydrofolate = N-formyl-L-methionyl-tRNA(fMet) + (6S)-5,6,7,8-tetrahydrofolate + H(+). In terms of biological role, attaches a formyl group to the free amino group of methionyl-tRNA(fMet). The formyl group appears to play a dual role in the initiator identity of N-formylmethionyl-tRNA by promoting its recognition by IF2 and preventing the misappropriation of this tRNA by the elongation apparatus. This Mycobacterium sp. (strain KMS) protein is Methionyl-tRNA formyltransferase.